We begin with the raw amino-acid sequence, 407 residues long: Argininosuccinate synthase (407 aa).

Residues 16 to 24 (AYSGGLDTS) and Ala44 each bind ATP. 2 residues coordinate L-citrulline: Tyr96 and Ser101. Gly126 is a binding site for ATP. Thr128, Asn132, and Asp133 together coordinate L-aspartate. Asn132 is an L-citrulline binding site. Residues Arg136, Ser185, Ser194, Glu270, and Tyr282 each contribute to the L-citrulline site.

Belongs to the argininosuccinate synthase family. Type 1 subfamily. Homotetramer.

The protein resides in the cytoplasm. It carries out the reaction L-citrulline + L-aspartate + ATP = 2-(N(omega)-L-arginino)succinate + AMP + diphosphate + H(+). It participates in amino-acid biosynthesis; L-arginine biosynthesis; L-arginine from L-ornithine and carbamoyl phosphate: step 2/3. In Shewanella sp. (strain W3-18-1), this protein is Argininosuccinate synthase.